Reading from the N-terminus, the 624-residue chain is Plastin-2 (624 aa).

EF-hand domains follow at residues 9–44 (EEME…ANLP) and 49–84 (RVRE…LKSS). Positions 22, 24, 26, 28, 33, 62, 64, 66, 68, and 73 each coordinate Ca(2+). Calponin-homology (CH) domains follow at residues 118-234 (EEEK…KIGL), 262-373 (LSPE…NKYP), 392-501 (TREE…RRYT), and 513-621 (KIID…ARGM). Actin-binding stretches follow at residues 118 to 373 (EEEK…NKYP) and 392 to 621 (TREE…ARGM).

In terms of assembly, monomer. As to expression, expressed by macrophages (at protein level).

The protein resides in the cytoplasm. Its subcellular location is the cytoskeleton. It is found in the cell junction. The protein localises to the cell projection. It localises to the ruffle membrane. In terms of biological role, actin-binding protein. Plays a role in the activation of T-cells. The polypeptide is Plastin-2 (Danio rerio (Zebrafish)).